Here is a 135-residue protein sequence, read N- to C-terminus: Sex-regulated protein janus-A (135 aa).

Lys-37 provides a ligand contact to substrate. Catalysis depends on His-63, which acts as the Proton acceptor. 104 to 106 is a substrate binding site; it reads SQG.

Belongs to the janus family.

JanA and janB regulate somatic sex differentiation. This chain is Sex-regulated protein janus-A (janA), found in Drosophila erecta (Fruit fly).